The primary structure comprises 1320 residues: MAASRRSQHHHHHHQQQLQPAPGASAPPPPPPPPLSPGLAPGPTPASPTAGGLAPFASPRHGLALPEGDGSRDPPDRPRSPDPVDGAVCTVAAPAAVPAASAAVGVAPTPAGGGGGGGNNSASSASSPTSSSSSSPSSPGSSLAESPEAAGVGSTATLGAGAAGLGPGVPAVSGALRELLEACRNGDVSRVKRLVDAANVNAKDMAGRKSSPLHFAAGFGRKDVVEHLLQMGANVHARDDGGLIPLHNACSFGHAEVVSLLLCQGADPNARDNWNYTPLHEAAIKGKIDVCIVLLQHGADPNIRNTDGKSALDLADPSAKAVLTGEYKKDELLEAARSGNEEKLMALLTPLNVNCHASDGRKSTPLHLAAGYNRVRIVQLLLQHGADVHAKDKGGLVPLHNACSYGHYEVTELLLKHGACVNAMDLWQFTPLHEAASKNRVEVCSLLLSHGADPTLVNCHGKSAVDMAPTPELRERLTYEFKGHSLLQAAREADLAKVKKTLALEIINFKQPQSHETALHCAVASLHPKRKQVAELLLRKGANVNEKNKDFMTPLHVAAERAHNDVMEVLHKHGAKMNALDSLGQTALHRAALAGHLQTCRLLLSYGSDPSIISLQGFTAAQMGNEAVQQILSESTPMRTSDVDYRLLEASKAGDLETVKQLCSPQNVNCRDLEGRHSTPLHFAAGYNRVSVVEYLLHHGADVHAKDKGGLVPLHNACSYGHYEVAELLVRHGASVNVADLWKFTPLHEAAAKGKYEICKLLLKHGADPTKKNRDGNTPLDLVKEGDTDIQDLLRGDAALLDAAKKGCLARVQKLCTPENINCRDTQGRNSTPLHLAAGYNNLEVAEYLLEHGADVNAQDKGGLIPLHNAASYGHVDIAALLIKYNTCVNATDKWAFTPLHEAAQKGRTQLCALLLAHGADPTMKNQEGQTPLDLATADDIRALLIDAMPPEALPTCFKPQATVVSASLISPASTPSCLSAASSIDNLTGPLTDLAVGGASNAGDGAAGAERKEGEVAGLDMNISQFLKSLGLEHLRDIFETEQITLDVLADMGHEELKEIGINAYGHRHKLIKGVERLLGGQQGTNPYLTFHCVNQGTILLDLAPEDKEYQSVEEEMQSTIREHRDGGNAGGIFNRYNVIRIQKVVNKKLRERFCHRQKEVSEENHNHHNERMLFHGSPFINAIIHKGFDERHAYIGGMFGAGIYFAENSSKSNQYVYGIGGGTGCPTHKDRSCYICHRQMLFCRVTLGKSFLQFSTMKMAHAPPGHHSVIGRPSVNGLAYAEYVIYRGEQAYPEYLITYQIMKPEAPSQTATAAEQKT.

Residues 1 to 15 (MAASRRSQHHHHHHQ) are compositionally biased toward basic residues. Disordered regions lie at residues 1-88 (MAAS…DGAV) and 111-152 (AGGG…AAGV). The segment covering 25–46 (SAPPPPPPPPLSPGLAPGPTPA) has biased composition (pro residues). A compositionally biased stretch (basic and acidic residues) spans 69–82 (DGSRDPPDRPRSPD). Over residues 120 to 152 (NSASSASSPTSSSSSSPSSPGSSLAESPEAAGV) the composition is skewed to low complexity. ANK repeat units lie at residues 174-202 (GALR…NVNA), 208-237 (RKSS…NVHA), 241-270 (GGLI…DPNA), 274-303 (WNYT…DPNI), 361-390 (RKST…DVHA), 394-423 (GGLV…CVNA), 427-456 (WQFT…DPTL), 514-546 (SHET…NVNE), 550-579 (DFMT…KMNA), 583-612 (LGQT…DPSI), 676-705 (RHST…DVHA), 709-738 (GGLV…SVNV), 742-771 (WKFT…DPTK), 775-803 (DGNT…LLDA), 829-858 (RNST…DVNA), 862-891 (GGLI…CVNA), 895-924 (WAFT…DPTM), and 928-957 (EGQT…LPTC). The 64-residue stretch at 1019–1082 (GLDMNISQFL…IKGVERLLGG (64 aa)) folds into the SAM domain. Residues 1105 to 1310 (APEDKEYQSV…YQIMKPEAPS (206 aa)) enclose the PARP catalytic domain. Residues Cys-1227, His-1230, Cys-1235, and Cys-1238 each coordinate Zn(2+).

This sequence belongs to the ARTD/PARP family. In terms of assembly, oligomerizes and associates with TNKS2. Interacts with the cytoplasmic domain of LNPEP/Otase in SLC2A4/GLUT4-vesicles. Binds to the N-terminus of telomeric TERF1 via the ANK repeats. Found in a complex with POT1; TERF1 and TINF2. Interacts with AXIN1. Interacts with AXIN2. Interacts with BLZF1 and CASC3. Interacts with NUMA1. Phosphorylated on serine residues by MAPK kinases upon insulin stimulation. Phosphorylated during mitosis. Post-translationally, ubiquitinated by RNF146 when auto-poly-ADP-ribosylated, leading to its degradation. In terms of processing, ADP-ribosylated (-auto). Poly-ADP-ribosylated protein is recognized by RNF146, followed by ubiquitination.

It localises to the cytoplasm. The protein localises to the golgi apparatus membrane. Its subcellular location is the cytoskeleton. The protein resides in the microtubule organizing center. It is found in the centrosome. It localises to the nucleus. The protein localises to the nuclear pore complex. Its subcellular location is the chromosome. The protein resides in the telomere. It is found in the spindle pole. It catalyses the reaction NAD(+) + (ADP-D-ribosyl)n-acceptor = nicotinamide + (ADP-D-ribosyl)n+1-acceptor + H(+).. The enzyme catalyses L-aspartyl-[protein] + NAD(+) = 4-O-(ADP-D-ribosyl)-L-aspartyl-[protein] + nicotinamide. It carries out the reaction L-glutamyl-[protein] + NAD(+) = 5-O-(ADP-D-ribosyl)-L-glutamyl-[protein] + nicotinamide. Its function is as follows. Poly-ADP-ribosyltransferase involved in various processes such as Wnt signaling pathway, telomere length and vesicle trafficking. Acts as an activator of the Wnt signaling pathway by mediating poly-ADP-ribosylation (PARsylation) of AXIN1 and AXIN2, 2 key components of the beta-catenin destruction complex: poly-ADP-ribosylated target proteins are recognized by RNF146, which mediates their ubiquitination and subsequent degradation. Also mediates PARsylation of BLZF1 and CASC3, followed by recruitment of RNF146 and subsequent ubiquitination. Mediates PARsylation of TERF1, thereby contributing to the regulation of telomere length. Involved in centrosome maturation during prometaphase by mediating PARsylation of HEPACAM2/MIKI. May also regulate vesicle trafficking and modulate the subcellular distribution of SLC2A4/GLUT4-vesicles. May be involved in spindle pole assembly through PARsylation of NUMA1. Stimulates 26S proteasome activity. The polypeptide is Poly [ADP-ribose] polymerase tankyrase-1 (Tnks) (Mus musculus (Mouse)).